The chain runs to 169 residues: Peptide methionine sulfoxide reductase MsrA (169 aa).

Residue C10 is part of the active site.

The protein belongs to the MsrA Met sulfoxide reductase family.

It carries out the reaction L-methionyl-[protein] + [thioredoxin]-disulfide + H2O = L-methionyl-(S)-S-oxide-[protein] + [thioredoxin]-dithiol. It catalyses the reaction [thioredoxin]-disulfide + L-methionine + H2O = L-methionine (S)-S-oxide + [thioredoxin]-dithiol. Has an important function as a repair enzyme for proteins that have been inactivated by oxidation. Catalyzes the reversible oxidation-reduction of methionine sulfoxide in proteins to methionine. This Streptococcus equi subsp. equi (strain 4047) protein is Peptide methionine sulfoxide reductase MsrA.